The primary structure comprises 344 residues: Biotin synthase (344 aa).

The 228-residue stretch at 40–267 folds into the Radical SAM core domain; sequence AQVQVSTLLS…KSMVRLSAGR (228 aa). 3 residues coordinate [4Fe-4S] cluster: C55, C59, and C62. [2Fe-2S] cluster-binding residues include C99, C130, C190, and R262.

It belongs to the radical SAM superfamily. Biotin synthase family. Homodimer. Requires [4Fe-4S] cluster as cofactor. The cofactor is [2Fe-2S] cluster.

The enzyme catalyses (4R,5S)-dethiobiotin + (sulfur carrier)-SH + 2 reduced [2Fe-2S]-[ferredoxin] + 2 S-adenosyl-L-methionine = (sulfur carrier)-H + biotin + 2 5'-deoxyadenosine + 2 L-methionine + 2 oxidized [2Fe-2S]-[ferredoxin]. It participates in cofactor biosynthesis; biotin biosynthesis; biotin from 7,8-diaminononanoate: step 2/2. Its function is as follows. Catalyzes the conversion of dethiobiotin (DTB) to biotin by the insertion of a sulfur atom into dethiobiotin via a radical-based mechanism. The chain is Biotin synthase from Xanthomonas euvesicatoria pv. vesicatoria (strain 85-10) (Xanthomonas campestris pv. vesicatoria).